The chain runs to 206 residues: Protein DEHYDRATION-INDUCED 19 (206 aa).

Phosphothreonine is present on T105. S107 carries the phosphoserine modification. The interval 142-167 is disordered; sequence SSFISPTRSQSSPAPRQTKNVSEDKQ. Polar residues predominate over residues 143 to 161; sequence SFISPTRSQSSPAPRQTKN.

The protein belongs to the Di19 family. As to quaternary structure, interacts with ADO2/LKP2, CPK11 and CPK4. Weak interaction with CPK12 and no interactions with CPK1, CPK5 or CPK26. Phosphorylated within the NLS/NES region. As to expression, expressed in seedlings, roots, leaves, stems, flowers and siliques.

It is found in the nucleus. In Arabidopsis thaliana (Mouse-ear cress), this protein is Protein DEHYDRATION-INDUCED 19 (DI19-1).